A 249-amino-acid chain; its full sequence is Deoxyribose-phosphate aldolase (249 aa).

Catalysis depends on D94, which acts as the Proton donor/acceptor. K158 (schiff-base intermediate with acetaldehyde) is an active-site residue. The Proton donor/acceptor role is filled by K200.

Belongs to the DeoC/FbaB aldolase family. DeoC type 1 subfamily.

It is found in the cytoplasm. It catalyses the reaction 2-deoxy-D-ribose 5-phosphate = D-glyceraldehyde 3-phosphate + acetaldehyde. It participates in carbohydrate degradation; 2-deoxy-D-ribose 1-phosphate degradation; D-glyceraldehyde 3-phosphate and acetaldehyde from 2-deoxy-alpha-D-ribose 1-phosphate: step 2/2. Catalyzes a reversible aldol reaction between acetaldehyde and D-glyceraldehyde 3-phosphate to generate 2-deoxy-D-ribose 5-phosphate. The protein is Deoxyribose-phosphate aldolase of Thermoplasma volcanium (strain ATCC 51530 / DSM 4299 / JCM 9571 / NBRC 15438 / GSS1).